The sequence spans 461 residues: Nuclear distribution protein PAC1 (461 aa).

A coiled-coil region spans residues 64 to 93 (NSIIRLHRKILDLEQKCQQLTEELEAVPTE). WD repeat units lie at residues 118–157 (DVGA…MPLH), 161–203 (AHMK…AFQL), 209–252 (SHEH…KSFQ), 254–292 (HNQW…SMAV), 318–362 (DDQV…FIPH), 382–421 (GHTS…KVWP), and 423–461 (ASHG…VFMR).

The protein belongs to the WD repeat LIS1/nudF family. As to quaternary structure, self-associates. Interacts with NDL1 and dynein.

Its subcellular location is the cytoplasm. The protein localises to the cytoskeleton. It localises to the spindle pole. Functionally, positively regulates the activity of the minus-end directed microtubule motor protein dynein. Plays a central role in positioning the mitotic spindle at the bud neck during cell division. Targets cytoplasmic dynein to microtubule plus ends, thereby promoting dynein-mediated microtubule sliding along the bud cortex and consequently the movement of the mitotic spindle to the bud neck. In Eremothecium gossypii (strain ATCC 10895 / CBS 109.51 / FGSC 9923 / NRRL Y-1056) (Yeast), this protein is Nuclear distribution protein PAC1.